A 306-amino-acid chain; its full sequence is tRNA dimethylallyltransferase 2 (306 aa).

Position 19–26 (19–26 (GATASGKT)) interacts with ATP. Substrate is bound at residue 21–26 (TASGKT). An interaction with substrate tRNA region spans residues 44–47 (DSRQ).

The protein belongs to the IPP transferase family. Monomer. Requires Mg(2+) as cofactor.

It carries out the reaction adenosine(37) in tRNA + dimethylallyl diphosphate = N(6)-dimethylallyladenosine(37) in tRNA + diphosphate. Its function is as follows. Catalyzes the transfer of a dimethylallyl group onto the adenine at position 37 in tRNAs that read codons beginning with uridine, leading to the formation of N6-(dimethylallyl)adenosine (i(6)A). The polypeptide is tRNA dimethylallyltransferase 2 (Citrifermentans bemidjiense (strain ATCC BAA-1014 / DSM 16622 / JCM 12645 / Bem) (Geobacter bemidjiensis)).